The chain runs to 55 residues: Large ribosomal subunit protein bL33 (55 aa).

It belongs to the bacterial ribosomal protein bL33 family.

The chain is Large ribosomal subunit protein bL33 from Clavibacter sepedonicus (Clavibacter michiganensis subsp. sepedonicus).